Here is a 669-residue protein sequence, read N- to C-terminus: Pre-mRNA-processing factor 39 (669 aa).

A compositionally biased stretch (basic and acidic residues) spans 1–10 (MQNSHMDEYR). The segment at 1 to 23 (MQNSHMDEYRNSSNGSTGNSSEV) is disordered. The span at 11 to 23 (NSSNGSTGNSSEV) shows a compositional bias: low complexity. Ser44 carries the post-translational modification Phosphoserine. HAT repeat units follow at residues 109-141 (NHLM…LEKR), 143-175 (DNIK…FLKE), 183-218 (ETNN…WENE), 220-253 (GNLR…HVQN), 333-365 (TFEE…FEIE), 367-399 (GTHE…YMEN), and 404-436 (GVRH…QQGN). Residues 599–624 (KEQDSLKRKAENGSEEPEEKKAHTED) show a composition bias toward basic and acidic residues. Residues 599–634 (KEQDSLKRKAENGSEEPEEKKAHTEDTTSSSTQMID) are disordered. A compositionally biased stretch (polar residues) spans 625–634 (TTSSSTQMID).

This sequence belongs to the PRP39 family.

The protein resides in the nucleus. Involved in pre-mRNA splicing. The sequence is that of Pre-mRNA-processing factor 39 (PRPF39) from Homo sapiens (Human).